Consider the following 252-residue polypeptide: tRNA uridine(34) hydroxylase (252 aa).

The Rhodanese domain maps to 129-223; it reads QGRPVVMLDT…YFEETGGKGF (95 aa). Catalysis depends on cysteine 183, which acts as the Cysteine persulfide intermediate.

This sequence belongs to the TrhO family.

It catalyses the reaction uridine(34) in tRNA + AH2 + O2 = 5-hydroxyuridine(34) in tRNA + A + H2O. In terms of biological role, catalyzes oxygen-dependent 5-hydroxyuridine (ho5U) modification at position 34 in tRNAs. The sequence is that of tRNA uridine(34) hydroxylase from Bordetella petrii (strain ATCC BAA-461 / DSM 12804 / CCUG 43448).